The primary structure comprises 157 residues: Small ribosomal subunit protein uS7 (157 aa).

This sequence belongs to the universal ribosomal protein uS7 family. As to quaternary structure, part of the 30S ribosomal subunit. Contacts proteins S9 and S11.

In terms of biological role, one of the primary rRNA binding proteins, it binds directly to 16S rRNA where it nucleates assembly of the head domain of the 30S subunit. Is located at the subunit interface close to the decoding center, probably blocks exit of the E-site tRNA. This chain is Small ribosomal subunit protein uS7, found in Rhodopirellula baltica (strain DSM 10527 / NCIMB 13988 / SH1).